The following is a 118-amino-acid chain: MFNRSEKVAEAIHELVSGLIVKGMKDPRIGFITITGVKVTDDIRQATIYYTVMGDDEARVSTARGLASATGFLRREIGKQLRLKFAPELHFKYDQSIEYGNRIDQLLKEIETEKGSDD.

Belongs to the RbfA family. In terms of assembly, monomer. Binds 30S ribosomal subunits, but not 50S ribosomal subunits or 70S ribosomes.

It localises to the cytoplasm. In terms of biological role, one of several proteins that assist in the late maturation steps of the functional core of the 30S ribosomal subunit. Associates with free 30S ribosomal subunits (but not with 30S subunits that are part of 70S ribosomes or polysomes). Required for efficient processing of 16S rRNA. May interact with the 5'-terminal helix region of 16S rRNA. The chain is Ribosome-binding factor A from Geobacter sulfurreducens (strain ATCC 51573 / DSM 12127 / PCA).